Consider the following 419-residue polypeptide: Phosphoglycerate kinase (419 aa).

13 residues coordinate (2R)-3-phosphoglycerate: V24, D25, F26, N27, R40, S63, H64, G66, R67, L122, R123, H169, and R170. Residue G213 participates in ADP binding. CDP is bound at residue G213. AMP-binding residues include A214 and K215. A214 contributes to the ATP binding site. A214 provides a ligand contact to Mg(2+). Mg(2+) contacts are provided by A217 and D218. A CDP-binding site is contributed by D218. K219 is a binding site for AMP. An ATP-binding site is contributed by K219. Residue G237 participates in ADP binding. G237 is a binding site for CDP. Positions 238 and 313 each coordinate AMP. G238 and G313 together coordinate ATP. Residues G338 and F343 each coordinate CDP. F343 contacts ADP. E344 is an AMP binding site. ATP is bound by residues E344, D375, and T376. Position 375 (D375) interacts with Mg(2+).

The protein belongs to the phosphoglycerate kinase family. Monomer. Mg(2+) is required as a cofactor.

The catalysed reaction is (2R)-3-phosphoglycerate + ATP = (2R)-3-phospho-glyceroyl phosphate + ADP. The protein operates within carbohydrate degradation; glycolysis; pyruvate from D-glyceraldehyde 3-phosphate: step 2/5. The polypeptide is Phosphoglycerate kinase (PGK) (Sterkiella nova (Ciliate)).